The primary structure comprises 151 residues: Deoxyuridine 5'-triphosphate nucleotidohydrolase (151 aa).

Substrate is bound by residues 70–72, N83, and 87–89; these read RSG and TID.

It belongs to the dUTPase family. It depends on Mg(2+) as a cofactor.

It carries out the reaction dUTP + H2O = dUMP + diphosphate + H(+). It functions in the pathway pyrimidine metabolism; dUMP biosynthesis; dUMP from dCTP (dUTP route): step 2/2. This enzyme is involved in nucleotide metabolism: it produces dUMP, the immediate precursor of thymidine nucleotides and it decreases the intracellular concentration of dUTP so that uracil cannot be incorporated into DNA. The sequence is that of Deoxyuridine 5'-triphosphate nucleotidohydrolase from Ruegeria pomeroyi (strain ATCC 700808 / DSM 15171 / DSS-3) (Silicibacter pomeroyi).